Reading from the N-terminus, the 449-residue chain is Tubulin beta chain (449 aa).

8 residues coordinate GTP: glutamine 11, glutamate 69, serine 138, glycine 142, threonine 143, glycine 144, asparagine 204, and asparagine 226. Mg(2+) is bound at residue glutamate 69. The disordered stretch occupies residues 426 to 449; it reads QDATAEEEGEFDEEEGVMDAEGAA. Acidic residues predominate over residues 429–443; sequence TAEEEGEFDEEEGVM.

The protein belongs to the tubulin family. As to quaternary structure, dimer of alpha and beta chains. A typical microtubule is a hollow water-filled tube with an outer diameter of 25 nm and an inner diameter of 15 nM. Alpha-beta heterodimers associate head-to-tail to form protofilaments running lengthwise along the microtubule wall with the beta-tubulin subunit facing the microtubule plus end conferring a structural polarity. Microtubules usually have 13 protofilaments but different protofilament numbers can be found in some organisms and specialized cells. Mg(2+) serves as cofactor.

The protein resides in the cytoplasm. The protein localises to the cytoskeleton. Tubulin is the major constituent of microtubules, a cylinder consisting of laterally associated linear protofilaments composed of alpha- and beta-tubulin heterodimers. Microtubules grow by the addition of GTP-tubulin dimers to the microtubule end, where a stabilizing cap forms. Below the cap, tubulin dimers are in GDP-bound state, owing to GTPase activity of alpha-tubulin. The polypeptide is Tubulin beta chain (Eimeria tenella (Coccidian parasite)).